The primary structure comprises 220 residues: Large ribosomal subunit protein uL3 (220 aa).

The interval 127 to 155 (FQGAIKRHGQSRGPMSHSSHFHRAPDSVG) is disordered.

It belongs to the universal ribosomal protein uL3 family. Part of the 50S ribosomal subunit. Forms a cluster with proteins L14 and L19.

In terms of biological role, one of the primary rRNA binding proteins, it binds directly near the 3'-end of the 23S rRNA, where it nucleates assembly of the 50S subunit. The sequence is that of Large ribosomal subunit protein uL3 from Staphylococcus aureus (strain JH9).